Consider the following 38-residue polypeptide: Odorant-binding protein 2 (38 aa).

The protein belongs to the calycin superfamily. Lipocalin family. As to expression, nasal mucosa.

It is found in the secreted. Its subcellular location is the extracellular space. In terms of biological role, this soluble protein may play a specific role in odor discrimination and perception. The protein is Odorant-binding protein 2 of Hystrix cristata (North African crested porcupine).